A 765-amino-acid polypeptide reads, in one-letter code: 5-methyltetrahydropteroyltriglutamate--homocysteine methyltransferase (765 aa).

Residues 18–21 (REWK) and Lys-114 contribute to the 5-methyltetrahydropteroyltri-L-glutamate site. L-homocysteine contacts are provided by residues 437-439 (IGS) and Glu-490. L-methionine contacts are provided by residues 437 to 439 (IGS) and Glu-490. Position 567 (Trp-567) interacts with 5-methyltetrahydropteroyltri-L-glutamate. Asp-605 lines the L-homocysteine pocket. Asp-605 lines the L-methionine pocket. Glu-611 is a 5-methyltetrahydropteroyltri-L-glutamate binding site. Zn(2+)-binding residues include His-647, Cys-649, and Glu-671. His-700 functions as the Proton donor in the catalytic mechanism. Residue Cys-732 coordinates Zn(2+).

It belongs to the vitamin-B12 independent methionine synthase family. Zn(2+) serves as cofactor.

It catalyses the reaction 5-methyltetrahydropteroyltri-L-glutamate + L-homocysteine = tetrahydropteroyltri-L-glutamate + L-methionine. Its pathway is amino-acid biosynthesis; L-methionine biosynthesis via de novo pathway; L-methionine from L-homocysteine (MetE route): step 1/1. In terms of biological role, catalyzes the transfer of a methyl group from 5-methyltetrahydrofolate to homocysteine resulting in methionine formation. The protein is 5-methyltetrahydropteroyltriglutamate--homocysteine methyltransferase of Listeria monocytogenes serotype 4b (strain F2365).